A 96-amino-acid chain; its full sequence is Putative membrane protein insertion efficiency factor (96 aa).

Over residues 71–84 the composition is skewed to low complexity; that stretch reads THGTAAAPPASAAP. Residues 71–96 form a disordered region; it reads THGTAAAPPASAAPGRPPVTVRLPRP.

It belongs to the UPF0161 family.

It is found in the cell inner membrane. Could be involved in insertion of integral membrane proteins into the membrane. This chain is Putative membrane protein insertion efficiency factor, found in Cupriavidus metallidurans (strain ATCC 43123 / DSM 2839 / NBRC 102507 / CH34) (Ralstonia metallidurans).